Consider the following 231-residue polypeptide: Protein OPG061 (231 aa).

It belongs to the orthopoxvirus OPG058 family.

The protein resides in the host nucleus. It is found in the host nucleolus. This is Protein OPG061 (OPG061) from Vaccinia virus (strain L-IVP) (VACV).